Consider the following 696-residue polypeptide: UV radiation resistance-associated gene protein (696 aa).

2 positions are modified to phosphoserine: Ser214 and Ser218. 2 coiled-coil regions span residues 251-278 (LLTL…IARL) and 330-394 (NAQQ…RLEL). Ser666 is modified (phosphoserine). Residues 666-696 (SYSDGEDEFRPRLEHNYSNSDSNITLQTERS) form a disordered region. Tyr667 carries the post-translational modification Phosphotyrosine. Residues Ser668 and Ser685 each carry the phosphoserine modification. A compositionally biased stretch (polar residues) spans 681–696 (NYSNSDSNITLQTERS).

Functionally, involved in biosynthetic vesicle transport to lysosomes. Acts as a cell growth regulator. Also has a crucial role in controlling organ rotation by regulating membrane-localized Notch receptor endocytosis and subsequent degradation. Regulation of organ rotation is not by induction of autophagy. This is UV radiation resistance-associated gene protein (Uvrag) from Drosophila melanogaster (Fruit fly).